A 130-amino-acid polypeptide reads, in one-letter code: MRPSLLRLASATSTQRGLKPNPMALLPPIPLYRRLLRAHRKHLPPDMRILGDEYIKAEFRAHRKVDNPAHLIGFLTEWQMYAQKIEGDQWVGDKLDEQKLSKMSDEQIQQLYELMQAIQNRGKEGGEQES.

The transit peptide at 1 to 8 directs the protein to the mitochondrion; that stretch reads MRPSLLRL.

This sequence belongs to the complex I LYR family. SDHAF3 subfamily. In terms of assembly, interacts with the iron-sulfur protein subunit within the SDH catalytic dimer.

The protein resides in the mitochondrion matrix. Plays an essential role in the assembly of succinate dehydrogenase (SDH), an enzyme complex (also referred to as respiratory complex II) that is a component of both the tricarboxylic acid (TCA) cycle and the mitochondrial electron transport chain, and which couples the oxidation of succinate to fumarate with the reduction of ubiquinone (coenzyme Q) to ubiquinol. Promotes maturation of the iron-sulfur protein subunit of the SDH catalytic dimer, protecting it from the deleterious effects of oxidants. May act together with SDHAF1. The protein is Succinate dehydrogenase assembly factor 3, mitochondrial of Gibberella zeae (strain ATCC MYA-4620 / CBS 123657 / FGSC 9075 / NRRL 31084 / PH-1) (Wheat head blight fungus).